Here is an 82-residue protein sequence, read N- to C-terminus: Small ribosomal subunit protein uS17 (82 aa).

The protein belongs to the universal ribosomal protein uS17 family. As to quaternary structure, part of the 30S ribosomal subunit.

In terms of biological role, one of the primary rRNA binding proteins, it binds specifically to the 5'-end of 16S ribosomal RNA. This is Small ribosomal subunit protein uS17 from Pelobacter propionicus (strain DSM 2379 / NBRC 103807 / OttBd1).